Here is a 249-residue protein sequence, read N- to C-terminus: Proteasome activator complex subunit 1 (249 aa).

A disordered region spans residues 60–102; it reads PLDIPVPDPVKEKEKEERKKQQEKEDKDEKKKGEDEDKGPPCG. The span at 68–98 shows a compositional bias: basic and acidic residues; that stretch reads PVKEKEKEERKKQQEKEDKDEKKKGEDEDKG.

This sequence belongs to the PA28 family. Heterodimer of PSME1 and PSME2, which forms a hexameric ring. PSME1 can form homoheptamers.

In terms of biological role, implicated in immunoproteasome assembly and required for efficient antigen processing. The PA28 activator complex enhances the generation of class I binding peptides by altering the cleavage pattern of the proteasome. The chain is Proteasome activator complex subunit 1 (PSME1) from Homo sapiens (Human).